A 151-amino-acid chain; its full sequence is Large ribosomal subunit protein bL9 (151 aa).

This sequence belongs to the bacterial ribosomal protein bL9 family.

In terms of biological role, binds to the 23S rRNA. The sequence is that of Large ribosomal subunit protein bL9 from Mycolicibacterium gilvum (strain PYR-GCK) (Mycobacterium gilvum (strain PYR-GCK)).